A 122-amino-acid polypeptide reads, in one-letter code: Prefoldin subunit 1 (122 aa).

Alanine 2 is subject to N-acetylalanine.

This sequence belongs to the prefoldin subunit beta family. Heterohexamer of two PFD-alpha type and four PFD-beta type subunits.

Binds specifically to cytosolic chaperonin (c-CPN) and transfers target proteins to it. Binds to nascent polypeptide chain and promotes folding in an environment in which there are many competing pathways for nonnative proteins. The polypeptide is Prefoldin subunit 1 (PFDN1) (Pongo abelii (Sumatran orangutan)).